Reading from the N-terminus, the 764-residue chain is MGSNLSPQLCLMPFILGLLSGGVTTTPLSLARSQGSCSLEGIEIKGGSFRLLQDGQALEYVCPSGFYPYPVQTRTCRSTGSWSTLQTQDQKTVKKAECRAIHCPRPHDFENGEYWPRSPYYNVSDEISFHCYDGYTLRGSANRTCQVNGRWSGQTAICDNGAGYCSNPGIPIGTRKVGSQYRLEDSVTYHCSRGLTLRGSQRRTCQEGGSWSGTEPSCQDSFMYDTPQEVAEAFLSSLTETIEGVDAEDGHGPGEQQKRKIVLDPSGSMNIYLVLDGSDSIGAGNFTGAKKCLVNLIEKVASYGVKPRYGLVTYATYPKIWVKVSEPDSSNADWVTKQLNEINYEDHKLKSGTNTKKALQAVYSMMSWPDDIPPEGWNRTRHVIILMTDGLHNMGGDPITVIDEIRDLLYIGKDRKNPREDYLDVYVFGVGPLVNQVNINALASKKDNEQHVFKVKDMENLEDVFFQMIDESQSLSLCGMVWEHRKGTDYHKQPWQAKISVTRPSKGHESCMGAVVSEYFVLTAAHCFTVDDKEHSIKVSVGGKKQDLEIEEVLFHPNYNINGKKEAGIPEFYDYDVALIKLKNKLNYRQTIRPICLPCTEGTTRALRLPPTTTCQQQKEELLPAQDIKALFVSEEEKKLTRKEVYIKNGDKKGSCERDAQYAPGYDKVKDISEVVTPRFLCTGGVSPYADPNTCRGDSGGPLIVHKRSRFIQVGVISWGVVDVCKNQKRQKQVPAHARDFHINLFQVLPWLKQKLQDEDLGFL.

An N-terminal signal peptide occupies residues 1 to 25 (MGSNLSPQLCLMPFILGLLSGGVTT). Sushi domains follow at residues 35–100 (GSCS…ECRA), 101–160 (IHCP…ICDN), and 163–220 (GYCS…SCQD). 6 cysteine pairs are disulfide-bonded: cysteine 37–cysteine 76, cysteine 62–cysteine 98, cysteine 103–cysteine 145, cysteine 131–cysteine 158, cysteine 165–cysteine 205, and cysteine 191–cysteine 218. Residues asparagine 122 and asparagine 142 are each glycosylated (N-linked (GlcNAc...) asparagine). The VWFA domain maps to 270-469 (NIYLVLDGSD…NLEDVFFQMI (200 aa)). Positions 278 and 280 each coordinate Mg(2+). A glycan (N-linked (GlcNAc...) asparagine) is linked at asparagine 285. Mg(2+) is bound at residue threonine 353. Residue asparagine 378 is glycosylated (N-linked (GlcNAc...) asparagine). Residues 477–757 (LCGMVWEHRK…VLPWLKQKLQ (281 aa)) form the Peptidase S1 domain. 5 disulfide bridges follow: cysteine 478-cysteine 596, cysteine 511-cysteine 527, cysteine 599-cysteine 615, cysteine 656-cysteine 682, and cysteine 695-cysteine 725. Residues histidine 526 and aspartate 576 each act as charge relay system in the active site. The active-site Charge relay system is the serine 699.

This sequence belongs to the peptidase S1 family. In terms of assembly, monomer. Interacts with complement C3b; this interaction is dependent on the presence of Mg(2+). Catalytic component of the C3 convertase of the alternative complement pathway, also named C3bBb, composed of complement factor B Bb and complement C3b. Catalytic component of the C5 convertase of the alternative complement pathway, also named C3bBb3b, composed of complement factor B Bb and additional molecules of complement C3b. Interacts to CFP; this interaction contributes to the stabilization of the active C3-convertase enzyme complex. It depends on Mg(2+) as a cofactor. Requires Mn(2+) as cofactor. Post-translationally, cleaved by CFD following activation of the alternative complement system, generating Ba and Bb chains. Cleavage and activation takes place when CFB is already associated with complement C3b.

The protein resides in the secreted. Its subcellular location is the cell surface. The enzyme catalyses Cleavage of Arg-|-Ser bond in complement component C3 alpha-chain to yield C3a and C3b, and Arg-|-Xaa bond in complement component C5 alpha-chain to yield C5a and C5b.. Functionally, precursor of the catalytic component of the C3 and C5 convertase complexes of the alternative pathway of the complement system, a cascade of proteins that leads to phagocytosis and breakdown of pathogens and signaling that strengthens the adaptive immune system. The alternative complement pathway acts as an amplification loop that enhances other complement pathways (classical, lectin and GZMK) by promoting formation of additional C3 and C5 convertases. CFB is cleaved and activated by CFD to generate Ba and Bb chains; Bb chain constituting the catalytic component of the C3 and C5 convertases. In terms of biological role, serine protease component of the complement C3 and C5 convertase complexes of the alternative complement pathway. Following cleavage and activation by factor D (CFD), forms the C3 convertase together with complement C3b. As part of the C3 convertase, cleaves and activates C3 into C3a anaphylatoxin and C3b opsonin, the next components of the complement pathways. When an additional complement C3b molecule binds to the C3 convertase, forms the C5 convertase, which cleaves and activates C5 into C5a anaphylatoxin and C5b component of the membrane attack complex. Involved in proliferation and differentiation of preactivated B-lymphocytes, rapid spreading of peripheral blood monocytes, stimulation of lymphocyte blastogenesis and lysis of erythrocytes. The protein is Complement factor B (CFB) of Pongo pygmaeus (Bornean orangutan).